Here is a 243-residue protein sequence, read N- to C-terminus: MTYSLRIADLPSNERPRERLIACGSQSLSTAELIAILLGTGQGKGKLSAVGLGQYILNQLSQYERDPLSILRNITVQELTQIHGIGTAKATTILAAIELGKRVFQSRPPELAVVESPQAAADALSQDLMWQTQEKFAVLLLDVKNRLLGTQVITIGTATETLAHPREIFGEVIRQGASRVIISHNHPSGNVEPSPEDINLTKQLLAGAQILDIPLLDHIIIGNGEHSSLRQITNLWEDYPQRG.

One can recognise an MPN domain in the interval 113–235 (VVESPQAAAD…HSSLRQITNL (123 aa)). Zn(2+) contacts are provided by His184, His186, and Asp197. The JAMM motif signature appears at 184-197 (HNHPSGNVEPSPED).

This sequence belongs to the UPF0758 family.

The protein is UPF0758 protein Tery_2667 of Trichodesmium erythraeum (strain IMS101).